A 232-amino-acid polypeptide reads, in one-letter code: tRNA (guanine-N(1)-)-methyltransferase (232 aa).

S-adenosyl-L-methionine contacts are provided by residues Gly-112 and 132–137 (IGDYVL).

It belongs to the RNA methyltransferase TrmD family. In terms of assembly, homodimer.

The protein resides in the cytoplasm. It catalyses the reaction guanosine(37) in tRNA + S-adenosyl-L-methionine = N(1)-methylguanosine(37) in tRNA + S-adenosyl-L-homocysteine + H(+). Specifically methylates guanosine-37 in various tRNAs. The polypeptide is tRNA (guanine-N(1)-)-methyltransferase (Anaplasma phagocytophilum (strain HZ)).